A 135-amino-acid chain; its full sequence is Small ribosomal subunit protein uS11 (135 aa).

Residues 1–10 are compositionally biased toward polar residues; it reads MPPKTRSQTG. A disordered region spans residues 1-28; the sequence is MPPKTRSQTGAKKVRRKEKKNVAHGHAH. The span at 12–28 shows a compositional bias: basic residues; the sequence is KKVRRKEKKNVAHGHAH.

It belongs to the universal ribosomal protein uS11 family. Part of the 30S ribosomal subunit. Interacts with proteins S7 and S18. Binds to IF-3.

Its function is as follows. Located on the platform of the 30S subunit, it bridges several disparate RNA helices of the 16S rRNA. Forms part of the Shine-Dalgarno cleft in the 70S ribosome. The polypeptide is Small ribosomal subunit protein uS11 (Acidothermus cellulolyticus (strain ATCC 43068 / DSM 8971 / 11B)).